Consider the following 388-residue polypeptide: Reducing end xylose-releasing exo-oligoxylanase (388 aa).

Catalysis depends on glutamate 70, which acts as the Proton donor. Aspartate 263 (proton acceptor) is an active-site residue.

Belongs to the glycosyl hydrolase 8 (cellulase D) family.

The catalysed reaction is Hydrolysis of (1-&gt;4)-beta-D-xylose residues from the reducing end of oligosaccharides.. Hydrolyzes xylooligosaccharides with a degree of polymerization of greater than or equal to 3, releasing xylose from the reducing end. Only hydrolyzes the beta anomers of xylooligosaccharides, with inversion of anomeric configuration. Hydrolyzes the glucose and xylose-based trisaccharides where xylose is located at the -1 subsite, GXX, XXG and GXG. Does not hydrolyze xylan, chitosan, lichenan, curdlan or carboxymethylcellulose. The sequence is that of Reducing end xylose-releasing exo-oligoxylanase from Halalkalibacterium halodurans (strain ATCC BAA-125 / DSM 18197 / FERM 7344 / JCM 9153 / C-125) (Bacillus halodurans).